Reading from the N-terminus, the 90-residue chain is ATP synthase subunit e, mitochondrial (90 aa).

At Ser-2 the chain carries N-acetylserine. A helical membrane pass occupies residues 7–23 (VLRWSALGAGVVYGFVH).

In terms of assembly, F-type ATP synthases have 2 components, the catalytic core F(1) and the membrane-embedded component F(0), linked together by a central stalk and a peripheral stalk. The central stalk, also called rotor shaft, is often seen as part of F(1). The peripheral stalk is seen as part of F(0). F(0) contains the membrane channel next to the rotor. F-type ATP synthases form dimers but each monomer functions independently in ATP generation. The dimer consists of 17 different polypeptides: ATP1 (subunit alpha, 3 molecules per monomer, part of F(1)), ATP2 (subunit beta, 3 copies per monomer, part of F(1)), ATP3 (subunit gamma, part of the central stalk), ATP4 (subunit b, part of the peripheral stalk), ATP5/OSCP (subunit 5/OSCP, part of the peripheral stalk), ATP6 (subunit a, part of the peripheral stalk), ATP7 (subunit d, part of the peripheral stalk), ATP8 (subunit 8, part of the peripheral stalk), OLI1 (subunit c, part of the rotor, 10 molecules per monomer), ATP14 (subunit h, part of the peripheral stalk), ATP15 (subunit epsilon, part of the central stalk), ATP16 (subunit delta, part of the central stalk), ATP17 (subunit f, part of the peripheral stalk), ATP18 (subunit i/j, part of the peripheral stalk), ATP19 (subunit k, dimer-specific, at interface between monomers), ATP20 (subunit g, at interface between monomers), TIM11 (subunit e, at interface between monomers).

It localises to the mitochondrion inner membrane. Functionally, mitochondrial membrane ATP synthase (F(1)F(0) ATP synthase or Complex V) produces ATP from ADP in the presence of a proton gradient across the membrane which is generated by electron transport complexes of the respiratory chain. F-type ATP synthases consist of two structural domains, F(1) - containing the extramembraneous catalytic core, and F(0) - containing the membrane proton channel, linked together by a central stalk and a peripheral stalk. During catalysis, ATP synthesis in the catalytic domain of F(1) is coupled via a rotary mechanism of the central stalk subunits to proton translocation. Part of the complex F(0) domain. Minor subunit located with subunit a/ATP6 in the membrane. Together with subunit g/ATP20, probably contributes to membrane curvature at the site of the ATP synthase dimer, ultimately contributing to formation of cristae. This is ATP synthase subunit e, mitochondrial from Yarrowia lipolytica (strain CLIB 122 / E 150) (Yeast).